Reading from the N-terminus, the 461-residue chain is Protein KlcB (461 aa).

Disordered stretches follow at residues 84 to 107 and 349 to 379; these read PEAT…TEDK and RAKA…EDAP. Over residues 91–101 the composition is skewed to basic residues; the sequence is ARRRTKARKSK. Basic and acidic residues predominate over residues 357–377; that stretch reads GQRREPVTPAKPEPEPAKDED.

This chain is Protein KlcB (klcB), found in Escherichia coli.